Here is a 123-residue protein sequence, read N- to C-terminus: Histone H2B.1, embryonic (123 aa).

Residues 1 to 32 (MAPTGQVAKKGSKKAVKPPRASGGKKRHRKRK) form a disordered region. Over residues 10–32 (KGSKKAVKPPRASGGKKRHRKRK) the composition is skewed to basic residues. The O-linked (GlcNAc) serine glycan is linked to S110. K118 is covalently cross-linked (Glycyl lysine isopeptide (Lys-Gly) (interchain with G-Cter in ubiquitin)).

The protein belongs to the histone H2B family. The nucleosome is a histone octamer containing two molecules each of H2A, H2B, H3 and H4 assembled in one H3-H4 heterotetramer and two H2A-H2B heterodimers. The octamer wraps approximately 147 bp of DNA. In terms of processing, monoubiquitination of Lys-118 gives a specific tag for epigenetic transcriptional activation and is also prerequisite for histone H3 'Lys-4' and 'Lys-79' methylation. GlcNAcylation at Ser-110 promotes monoubiquitination of Lys-118. It fluctuates in response to extracellular glucose, and associates with transcribed genes.

The protein resides in the nucleus. It is found in the chromosome. Core component of nucleosome. Nucleosomes wrap and compact DNA into chromatin, limiting DNA accessibility to the cellular machineries which require DNA as a template. Histones thereby play a central role in transcription regulation, DNA repair, DNA replication and chromosomal stability. DNA accessibility is regulated via a complex set of post-translational modifications of histones, also called histone code, and nucleosome remodeling. The sequence is that of Histone H2B.1, embryonic from Psammechinus miliaris (Green sea urchin).